The primary structure comprises 901 residues: HTH-type transcriptional regulator MalT (901 aa).

Residue 39–46 participates in ATP binding; that stretch reads SPAGYGKT. The region spanning 829-894 is the HTH luxR-type domain; sequence ELIRTSPLTQ…DAVQHAQQLL (66 aa). The segment at residues 853–872 is a DNA-binding region (H-T-H motif); it reads NEQIAGELAVAATTIKTHIR.

This sequence belongs to the MalT family. As to quaternary structure, monomer in solution. Oligomerizes to an active state in the presence of the positive effectors ATP and maltotriose.

Its activity is regulated as follows. Activated by ATP and maltotriose, which are both required for DNA binding. Positively regulates the transcription of the maltose regulon whose gene products are responsible for uptake and catabolism of malto-oligosaccharides. Specifically binds to the promoter region of its target genes, recognizing a short DNA motif called the MalT box. This is HTH-type transcriptional regulator MalT from Salmonella agona (strain SL483).